Here is a 319-residue protein sequence, read N- to C-terminus: Cytochrome c biogenesis protein CcsA (319 aa).

Helical transmembrane passes span 9-29 (ILTH…LITL), 44-64 (GVIG…AYSG), 71-91 (LYES…FPYL), 143-163 (MVLG…LLVI), 225-245 (IISL…VWAN), 259-273 (TWAF…IYLH), and 286-306 (AIVA…VNLL).

This sequence belongs to the CcmF/CycK/Ccl1/NrfE/CcsA family. As to quaternary structure, may interact with Ccs1.

Its subcellular location is the plastid. The protein resides in the chloroplast thylakoid membrane. Required during biogenesis of c-type cytochromes (cytochrome c6 and cytochrome f) at the step of heme attachment. The polypeptide is Cytochrome c biogenesis protein CcsA (Oenothera argillicola (Appalachian evening primrose)).